We begin with the raw amino-acid sequence, 2271 residues long: Protein Ycf2 (2271 aa).

Residue 1628–1635 (GSIGTGRS) coordinates ATP.

This sequence belongs to the Ycf2 family.

Its subcellular location is the plastid. It localises to the chloroplast stroma. In terms of biological role, probable ATPase of unknown function. Its presence in a non-photosynthetic plant (Epifagus virginiana) and experiments in tobacco indicate that it has an essential function which is probably not related to photosynthesis. The sequence is that of Protein Ycf2 from Illicium oligandrum (Star anise).